The following is a 149-amino-acid chain: Cytochrome c-556 (149 aa).

A signal peptide spans 1 to 20 (MLRTVIVAGALVLTASAVMA). The heme c site is built by methionine 32, cysteine 137, cysteine 140, and histidine 141.

As to quaternary structure, monomer. Post-translationally, binds 1 heme c group covalently per subunit.

Functionally, low-spin monoheme cytochrome c. In Rhodopseudomonas palustris (strain ATCC BAA-98 / CGA009), this protein is Cytochrome c-556.